Here is a 375-residue protein sequence, read N- to C-terminus: Secondary metabolism regulator laeA (375 aa).

A compositionally biased stretch (polar residues) spans alanine 15–glycine 26. Disordered regions lie at residues alanine 15–glutamine 37 and glutamine 50–tyrosine 75.

This sequence belongs to the methyltransferase superfamily. LaeA methyltransferase family. In terms of assembly, component of the heterotrimeric velvet complex composed of laeA, veA and velB; VeA acting as a bridging protein between laeA and velB.

The protein resides in the nucleus. The enzyme catalyses L-methionyl-[protein] + S-adenosyl-L-methionine = S-methyl-L-methionyl-[protein] + S-adenosyl-L-homocysteine. Its function is as follows. Methyltransferase that performs automethylation. No other methyl-accepting substrate has been identified yet. Component of the velvet transcription factor complex that acts as a global regulator for secondary metabolite gene expression. Controls the expression of the citric acid, demethylkotanin, orlandin, asperrubrol, tensidol B, atromentin and JBIR8 gene clusters. Also represses the expression of genes related to the production of BMS-192548 and aspernigrin A. The polypeptide is Secondary metabolism regulator laeA (Aspergillus niger (strain ATCC 1015 / CBS 113.46 / FGSC A1144 / LSHB Ac4 / NCTC 3858a / NRRL 328 / USDA 3528.7)).